A 192-amino-acid polypeptide reads, in one-letter code: Ion-translocating oxidoreductase complex subunit B (192 aa).

The tract at residues 1–26 (MNTIWIAVGALALLGLVFGAILGYAS) is hydrophobic. Residues 32 to 91 (EDDPVVEKIDAILPQSQCGQCGYPGCRPYAEAVGLQGEKINRCAPGGEAVMLKIAELLNV) form the 4Fe-4S domain. Residues cysteine 49, cysteine 52, cysteine 57, cysteine 74, cysteine 117, cysteine 120, cysteine 123, cysteine 127, cysteine 147, cysteine 150, cysteine 153, and cysteine 157 each coordinate [4Fe-4S] cluster. 4Fe-4S ferredoxin-type domains are found at residues 108–137 (MLAV…GATR) and 138–167 (AMHT…LRPV).

Belongs to the 4Fe4S bacterial-type ferredoxin family. RnfB subfamily. As to quaternary structure, the complex is composed of six subunits: RsxA, RsxB, RsxC, RsxD, RsxE and RsxG. Requires [4Fe-4S] cluster as cofactor.

The protein localises to the cell inner membrane. In terms of biological role, part of a membrane-bound complex that couples electron transfer with translocation of ions across the membrane. Required to maintain the reduced state of SoxR. The sequence is that of Ion-translocating oxidoreductase complex subunit B from Salmonella newport (strain SL254).